We begin with the raw amino-acid sequence, 156 residues long: Small ribosomal subunit protein uS7 (156 aa).

This sequence belongs to the universal ribosomal protein uS7 family. In terms of assembly, part of the 30S ribosomal subunit. Contacts proteins S9 and S11.

One of the primary rRNA binding proteins, it binds directly to 16S rRNA where it nucleates assembly of the head domain of the 30S subunit. Is located at the subunit interface close to the decoding center, probably blocks exit of the E-site tRNA. This is Small ribosomal subunit protein uS7 from Cellvibrio japonicus (strain Ueda107) (Pseudomonas fluorescens subsp. cellulosa).